An 81-amino-acid chain; its full sequence is Photosystem I iron-sulfur center (81 aa).

2 consecutive 4Fe-4S ferredoxin-type domains span residues 2 to 31 and 37 to 68; these read SHSV…MVPW and GQIA…VRVY. [4Fe-4S] cluster contacts are provided by C11, C14, C17, C21, C48, C51, C54, and C58.

The cyanobacterial PSI reaction center is composed of one copy each of PsaA,B,C,D,E,F,I,J,K,L,M and X, and forms trimeric complexes. It depends on [4Fe-4S] cluster as a cofactor.

It localises to the cellular thylakoid membrane. The enzyme catalyses reduced [plastocyanin] + hnu + oxidized [2Fe-2S]-[ferredoxin] = oxidized [plastocyanin] + reduced [2Fe-2S]-[ferredoxin]. Its function is as follows. Apoprotein for the two 4Fe-4S centers FA and FB of photosystem I (PSI); essential for photochemical activity. FB is the terminal electron acceptor of PSI, donating electrons to ferredoxin. The C-terminus interacts with PsaA/B/D and helps assemble the protein into the PSI complex. Required for binding of PsaD and PsaE to PSI. PSI is a plastocyanin/cytochrome c6-ferredoxin oxidoreductase, converting photonic excitation into a charge separation, which transfers an electron from the donor P700 chlorophyll pair to the spectroscopically characterized acceptors A0, A1, FX, FA and FB in turn. In Prochlorococcus marinus (strain SARG / CCMP1375 / SS120), this protein is Photosystem I iron-sulfur center.